Consider the following 142-residue polypeptide: MFQGASALSLDAKGRMSIPSRHREALQQQAEGRVTLTKHPDGCLLLFPRPEWETFRTRIAALPMDAHWWKRIFLGNAADVEMDGAGRVLIAPELRSAAMLDKEVMLLGMGSHFEVWDAATYAAKEQQAMAQGMPEALKNFSF.

2 consecutive SpoVT-AbrB domains span residues 5 to 51 (ASAL…PRPE) and 77 to 120 (AADV…DAAT).

This sequence belongs to the MraZ family. In terms of assembly, forms oligomers.

The protein localises to the cytoplasm. The protein resides in the nucleoid. The chain is Transcriptional regulator MraZ from Cupriavidus taiwanensis (strain DSM 17343 / BCRC 17206 / CCUG 44338 / CIP 107171 / LMG 19424 / R1) (Ralstonia taiwanensis (strain LMG 19424)).